The sequence spans 200 residues: GTP cyclohydrolase-2 (200 aa).

Residue 50–54 (RIHSE) coordinates GTP. The Zn(2+) site is built by Cys55, Cys66, and Cys68. Residues Gln71, 93–95 (EGR), and Thr115 contribute to the GTP site. The active-site Proton acceptor is Asp127. The Nucleophile role is filled by Arg129. GTP contacts are provided by Thr150 and Lys155.

It belongs to the GTP cyclohydrolase II family. Zn(2+) serves as cofactor.

The catalysed reaction is GTP + 4 H2O = 2,5-diamino-6-hydroxy-4-(5-phosphoribosylamino)-pyrimidine + formate + 2 phosphate + 3 H(+). The protein operates within cofactor biosynthesis; riboflavin biosynthesis; 5-amino-6-(D-ribitylamino)uracil from GTP: step 1/4. Its function is as follows. Catalyzes the conversion of GTP to 2,5-diamino-6-ribosylamino-4(3H)-pyrimidinone 5'-phosphate (DARP), formate and pyrophosphate. The protein is GTP cyclohydrolase-2 of Acinetobacter baylyi (strain ATCC 33305 / BD413 / ADP1).